The sequence spans 290 residues: Acetyl-coenzyme A carboxylase carboxyl transferase subunit beta (290 aa).

Positions 27–290 (LWVKCPSCEA…LQRQPADALA (264 aa)) constitute a CoA carboxyltransferase N-terminal domain. Zn(2+) is bound by residues cysteine 31, cysteine 34, cysteine 50, and cysteine 53. The C4-type zinc finger occupies 31 to 53 (CPSCEAVLYRNDVDANLHVCPKC).

Belongs to the AccD/PCCB family. In terms of assembly, acetyl-CoA carboxylase is a heterohexamer composed of biotin carboxyl carrier protein (AccB), biotin carboxylase (AccC) and two subunits each of ACCase subunit alpha (AccA) and ACCase subunit beta (AccD). Zn(2+) is required as a cofactor.

The protein localises to the cytoplasm. It carries out the reaction N(6)-carboxybiotinyl-L-lysyl-[protein] + acetyl-CoA = N(6)-biotinyl-L-lysyl-[protein] + malonyl-CoA. It functions in the pathway lipid metabolism; malonyl-CoA biosynthesis; malonyl-CoA from acetyl-CoA: step 1/1. Component of the acetyl coenzyme A carboxylase (ACC) complex. Biotin carboxylase (BC) catalyzes the carboxylation of biotin on its carrier protein (BCCP) and then the CO(2) group is transferred by the transcarboxylase to acetyl-CoA to form malonyl-CoA. The protein is Acetyl-coenzyme A carboxylase carboxyl transferase subunit beta of Burkholderia cenocepacia (strain ATCC BAA-245 / DSM 16553 / LMG 16656 / NCTC 13227 / J2315 / CF5610) (Burkholderia cepacia (strain J2315)).